A 789-amino-acid polypeptide reads, in one-letter code: Larval serum protein 1 beta chain (789 aa).

The first 16 residues, 1 to 16, serve as a signal peptide directing secretion; that stretch reads MKIAIALLACLGLAAA.

The protein belongs to the hemocyanin family. Heterohexamer, composed of three subunits, alpha, beta and gamma. In terms of tissue distribution, larval hemolymph.

The protein localises to the secreted. It localises to the extracellular space. Larval storage protein (LSP) which may serve as a store of amino acids for synthesis of adult proteins. The polypeptide is Larval serum protein 1 beta chain (Lsp1beta) (Drosophila melanogaster (Fruit fly)).